Reading from the N-terminus, the 264-residue chain is 3-methyl-2-oxobutanoate hydroxymethyltransferase (264 aa).

Mg(2+) is bound by residues D45 and D84. Residues 45–46, D84, and K112 contribute to the 3-methyl-2-oxobutanoate site; that span reads DS. Residue E114 coordinates Mg(2+). Catalysis depends on E181, which acts as the Proton acceptor.

Belongs to the PanB family. As to quaternary structure, homodecamer; pentamer of dimers. Requires Mg(2+) as cofactor.

The protein localises to the cytoplasm. The catalysed reaction is 3-methyl-2-oxobutanoate + (6R)-5,10-methylene-5,6,7,8-tetrahydrofolate + H2O = 2-dehydropantoate + (6S)-5,6,7,8-tetrahydrofolate. It participates in cofactor biosynthesis; (R)-pantothenate biosynthesis; (R)-pantoate from 3-methyl-2-oxobutanoate: step 1/2. Functionally, catalyzes the reversible reaction in which hydroxymethyl group from 5,10-methylenetetrahydrofolate is transferred onto alpha-ketoisovalerate to form ketopantoate. This Shewanella frigidimarina (strain NCIMB 400) protein is 3-methyl-2-oxobutanoate hydroxymethyltransferase.